The primary structure comprises 36 residues: U4-ctenitoxin-Pr1a (36 aa).

Cystine bridges form between C3–C17, C10–C22, and C16–C34.

As to expression, expressed by the venom gland.

It localises to the secreted. Functionally, neurotoxin. Causes spastic paralysis and death in mice. Moderate inhibitor of L-type calcium channels (Cav1/CACNA1). The protein is U4-ctenitoxin-Pr1a of Phoneutria reidyi (Brazilian Amazonian armed spider).